We begin with the raw amino-acid sequence, 243 residues long: Ubiquinone/menaquinone biosynthesis C-methyltransferase UbiE (243 aa).

S-adenosyl-L-methionine contacts are provided by residues Thr69, Asp90, and 116-117 (DA).

This sequence belongs to the class I-like SAM-binding methyltransferase superfamily. MenG/UbiE family.

It carries out the reaction a 2-demethylmenaquinol + S-adenosyl-L-methionine = a menaquinol + S-adenosyl-L-homocysteine + H(+). The catalysed reaction is a 2-methoxy-6-(all-trans-polyprenyl)benzene-1,4-diol + S-adenosyl-L-methionine = a 5-methoxy-2-methyl-3-(all-trans-polyprenyl)benzene-1,4-diol + S-adenosyl-L-homocysteine + H(+). Its pathway is quinol/quinone metabolism; menaquinone biosynthesis; menaquinol from 1,4-dihydroxy-2-naphthoate: step 2/2. It functions in the pathway cofactor biosynthesis; ubiquinone biosynthesis. Methyltransferase required for the conversion of demethylmenaquinol (DMKH2) to menaquinol (MKH2) and the conversion of 2-polyprenyl-6-methoxy-1,4-benzoquinol (DDMQH2) to 2-polyprenyl-3-methyl-6-methoxy-1,4-benzoquinol (DMQH2). The sequence is that of Ubiquinone/menaquinone biosynthesis C-methyltransferase UbiE from Ralstonia nicotianae (strain ATCC BAA-1114 / GMI1000) (Ralstonia solanacearum).